The sequence spans 342 residues: RNA 3'-terminal phosphate cyclase (342 aa).

Residues glutamine 103 and 283–287 contribute to the ATP site; that span reads YLADQ. Catalysis depends on histidine 308, which acts as the Tele-AMP-histidine intermediate.

Belongs to the RNA 3'-terminal cyclase family. Type 1 subfamily.

The protein resides in the cytoplasm. It carries out the reaction a 3'-end 3'-phospho-ribonucleotide-RNA + ATP = a 3'-end 2',3'-cyclophospho-ribonucleotide-RNA + AMP + diphosphate. In terms of biological role, catalyzes the conversion of 3'-phosphate to a 2',3'-cyclic phosphodiester at the end of RNA. The mechanism of action of the enzyme occurs in 3 steps: (A) adenylation of the enzyme by ATP; (B) transfer of adenylate to an RNA-N3'P to produce RNA-N3'PP5'A; (C) and attack of the adjacent 2'-hydroxyl on the 3'-phosphorus in the diester linkage to produce the cyclic end product. The biological role of this enzyme is unknown but it is likely to function in some aspects of cellular RNA processing. The protein is RNA 3'-terminal phosphate cyclase of Shigella dysenteriae serotype 1 (strain Sd197).